The following is a 295-amino-acid chain: (R)-3-hydroxydecanoyl-ACP:CoA transacylase (295 aa).

Residues 28–254 (NTIILINGSL…VIRDAGHFLD (227 aa)) enclose the AB hydrolase-1 domain.

Its pathway is polyester biosynthesis; polyhydroxyalkanoate biosynthesis. Functionally, catalyzes the transfer of the acyl moiety from in vitro synthesized 3-hydroxydecanoyl-CoA to acyl carrier protein. This is (R)-3-hydroxydecanoyl-ACP:CoA transacylase (phaG) from Ectopseudomonas oleovorans (Pseudomonas oleovorans).